A 1141-amino-acid chain; its full sequence is Envelopment polyprotein (1141 aa).

An N-terminal signal peptide occupies residues Met1–Gly18. The Lumenal portion of the chain corresponds to Phe19–Pro483. 10 disulfide bridges follow: Cys30-Cys158, Cys64-Cys164, Cys113-Cys135, Cys140-Cys145, Cys182-Cys192, Cys217-Cys253, Cys242-Cys357, Cys382-Cys441, Cys386-Cys395, and Cys458-Cys481. A glycan (N-linked (GlcNAc...) asparagine; by host) is linked at Asn141. Asn353 is a glycosylation site (N-linked (GlcNAc...) asparagine; by host). A glycan (N-linked (GlcNAc...) asparagine; by host) is linked at Asn405. The chain crosses the membrane as a helical span at residues Gly484–Thr506. Residues Thr507 to Cys633 are Cytoplasmic-facing. The tract at residues Cys522 to Lys539 is binding to the ribonucleoprotein. 2 CCHC-type zinc fingers span residues Cys551–Cys571 and Cys576–Cys597. 3 binding to the ribonucleoprotein regions span residues Tyr594–Leu611, Lys598–Lys609, and Gln617–Ser631. Residues Gln617–Met640 enclose the ITAM domain. Phosphotyrosine is present on residues Tyr621 and Tyr634. The YxxL signature appears at Tyr621–Leu624. A helical membrane pass occupies residues Tyr634–Ala654. The Lumenal segment spans residues Asp655–Asn1110. 8 disulfide bridges follow: Cys741–Cys776, Cys745–Cys783, Cys757–Cys890, Cys771–Cys901, Cys786–Cys909, Cys812–Cys821, Cys829–Cys838, and Cys869–Cys873. Positions Tyr763 to Cys783 are fusion loop. The N-linked (GlcNAc...) asparagine; by host glycan is linked to Asn933. Intrachain disulfides connect Cys975-Cys1005, Cys998-Cys1050, Cys1015-Cys1020, Cys1051-Cys1056, and Cys1090-Cys1094. Residues Trp1111 to Phe1131 traverse the membrane as a helical segment. The binding to the ribonucleoprotein stretch occupies residues Leu1127–Leu1141. Topologically, residues Cys1132 to Leu1141 are cytoplasmic.

This sequence belongs to the hantavirus envelope glycoprotein family. As to quaternary structure, homodimer. Homotetramer; forms heterotetrameric Gn-Gc spikes in the pre-fusion conformation. Interacts (via C-terminus) with the nucleoprotein. Interacts with host TUFM; this interaction contributes to the virus-induced degradation of mitochondria by autophagy, which leads to degradation of host MAVS and inhibition of type I interferon (IFN) responses. Interacts with host MAP1LC3B; this interaction contributes to the virus-induced degradation of mitochondria by autophagy, which leads to degradation of host MAVS and inhibition of type I interferon (IFN) responses. Homodimer. Homotetramer; forms heterotetrameric Gn-Gc spikes in the pre-fusion conformation. Homotrimer; forms homotrimer in the post-fusion conformation at acidic pH. Interacts (via C-terminus) with the nucleoprotein. Envelope polyprotein precursor is quickly cleaved in vivo just after synthesis, presumably by host signal peptidase.

It localises to the virion membrane. It is found in the host cell surface. The protein localises to the host Golgi apparatus membrane. The protein resides in the host endoplasmic reticulum membrane. Its subcellular location is the host mitochondrion. Its function is as follows. Forms homotetramers with glycoprotein C at the surface of the virion. Attaches the virion to host cell receptors including integrin ITGAV/ITGB3. This attachment induces virion internalization predominantly through clathrin-dependent endocytosis. Mediates the assembly and budding of infectious virus particles through its interaction with the nucleocapsid protein and the viral genome. May dysregulate normal immune and endothelial cell responses through an ITAM motif. Translocates to mitochondria, binds to host TUFM and recruits MAP1LC3B. These interactions induce mitochondrial autophagy and therefore destruction of host MAVS leading to inhibition of type I interferon (IFN) responses. Concomitant breakdown of glycoprotein N is apparently prevented by the nucleoprotein that may inhibit Gn-stimulated autophagosome-lysosome fusion. Interacts with the viral genomic RNA. In terms of biological role, forms homotetramers with glycoprotein N at the surface of the virion. Attaches the virion to host cell receptors including integrin ITGAV/ITGB3. This attachment induces virion internalization predominantly through clathrin-dependent endocytosis. Class II fusion protein that promotes fusion of viral membrane with host endosomal membrane after endocytosis of the virion. In Homo sapiens (Human), this protein is Envelopment polyprotein (GP).